The sequence spans 190 residues: ATP-dependent Clp protease proteolytic subunit 2 (190 aa).

The Nucleophile role is filled by S98. H123 is an active-site residue.

Belongs to the peptidase S14 family. As to quaternary structure, fourteen ClpP subunits assemble into 2 heptameric rings which stack back to back to give a disk-like structure with a central cavity, resembling the structure of eukaryotic proteasomes.

Its subcellular location is the cytoplasm. It catalyses the reaction Hydrolysis of proteins to small peptides in the presence of ATP and magnesium. alpha-casein is the usual test substrate. In the absence of ATP, only oligopeptides shorter than five residues are hydrolyzed (such as succinyl-Leu-Tyr-|-NHMec, and Leu-Tyr-Leu-|-Tyr-Trp, in which cleavage of the -Tyr-|-Leu- and -Tyr-|-Trp bonds also occurs).. Functionally, cleaves peptides in various proteins in a process that requires ATP hydrolysis. Has a chymotrypsin-like activity. Plays a major role in the degradation of misfolded proteins. The sequence is that of ATP-dependent Clp protease proteolytic subunit 2 from Bacillus licheniformis (strain ATCC 14580 / DSM 13 / JCM 2505 / CCUG 7422 / NBRC 12200 / NCIMB 9375 / NCTC 10341 / NRRL NRS-1264 / Gibson 46).